Reading from the N-terminus, the 274-residue chain is tRNA-cytidine(32) 2-sulfurtransferase (274 aa).

The PP-loop motif motif lies at 40 to 45 (SGGKDS). [4Fe-4S] cluster-binding residues include cysteine 115, cysteine 118, and cysteine 206.

It belongs to the TtcA family. As to quaternary structure, homodimer. It depends on Mg(2+) as a cofactor. [4Fe-4S] cluster is required as a cofactor.

It is found in the cytoplasm. It catalyses the reaction cytidine(32) in tRNA + S-sulfanyl-L-cysteinyl-[cysteine desulfurase] + AH2 + ATP = 2-thiocytidine(32) in tRNA + L-cysteinyl-[cysteine desulfurase] + A + AMP + diphosphate + H(+). Its pathway is tRNA modification. Its function is as follows. Catalyzes the ATP-dependent 2-thiolation of cytidine in position 32 of tRNA, to form 2-thiocytidine (s(2)C32). The sulfur atoms are provided by the cysteine/cysteine desulfurase (IscS) system. This chain is tRNA-cytidine(32) 2-sulfurtransferase, found in Stutzerimonas stutzeri (strain A1501) (Pseudomonas stutzeri).